The chain runs to 570 residues: Dwarfin sma-4 (570 aa).

The segment at 115–134 is disordered; sequence SSQASSQPPPTPTVNPTPIP. Over residues 121–134 the composition is skewed to pro residues; that stretch reads QPPPTPTVNPTPIP. Residues 150–273 form the MH1 domain; sequence QISHVLQCYQ…YERVVSNRIT (124 aa). Positions 203, 247, 258, and 263 each coordinate Zn(2+). One can recognise an MH2 domain in the interval 350-570; sequence WCSIIYYELD…LKNSSQFGSS (221 aa).

Belongs to the dwarfin/SMAD family.

The protein localises to the cytoplasm. It is found in the nucleus. Its function is as follows. Involved in TGF-beta pathway. The protein is Dwarfin sma-4 (sma-4) of Caenorhabditis elegans.